The chain runs to 627 residues: Mitochondrial Rho GTPase 1 (627 aa).

The Miro 1 domain maps to 1 to 169; it reads MATVRICVCG…FFLCQKAVTH (169 aa). Residues 1–599 lie on the Cytoplasmic side of the membrane; it reads MATVRICVCG…PRSNEEGPDR (599 aa). GTP is bound by residues 10 to 17, 58 to 62, and 114 to 117; these read GDESTGKS, DTSAR, and NKSD. EF-hand domains follow at residues 185 to 220 and 305 to 340; these read LCINALKRIFYLCDKDQDGYLNEQEMRDFQARCFDK and AGYRFFVDLFLIFDKDNDGGLNDEELEALFAPAPGL. Residues Asp-198, Asp-200, Asp-202, Tyr-204, Glu-209, Asp-318, Asp-320, Asp-322, and Glu-329 each coordinate Ca(2+). In terms of domain architecture, Miro 2 spans 420-584; the sequence is RNVVLCYVLG…FVAYADAATT (165 aa). GTP is bound by residues 429-436, 465-469, and 534-537; these read GASGAGKS, ELPGG, and LKAD. A helical; Anchor for type IV membrane protein transmembrane segment spans residues 600-620; sequence TSLYIALGATACAGVAALTIW. The Mitochondrial intermembrane segment spans residues 621 to 627; it reads RRATNAL.

Belongs to the mitochondrial Rho GTPase family.

The protein localises to the mitochondrion outer membrane. Mitochondrial GTPase involved in mitochondrial trafficking. Probably involved in control of anterograde transport of mitochondria and their subcellular distribution. The polypeptide is Mitochondrial Rho GTPase 1 (GEM1) (Gibberella zeae (strain ATCC MYA-4620 / CBS 123657 / FGSC 9075 / NRRL 31084 / PH-1) (Wheat head blight fungus)).